The chain runs to 1214 residues: Peregrin (1214 aa).

Residues 21-47 (YECPVETCRKVYKSYSGIEYHLYHYDH) form a C2H2-type zinc finger. Disordered regions lie at residues 43-87 (YHYD…SPGR) and 118-177 (VVSE…PKLP). The segment covering 58 to 67 (LRKHKKKGRQ) has biased composition (basic residues). The segment at 59-222 (RKHKKKGRQS…VEYDMDEEDY (164 aa)) is interaction with KAT6A and KAT6B. Residues 74 to 85 (QSPSPSEVSQSP) show a composition bias toward low complexity. Residues 119–130 (VSEDEEAPEEAP) show a composition bias toward acidic residues. Ser120 carries the phosphoserine modification. Residue Lys147 is modified to N6-acetyllysine. The span at 148–167 (SGKHKNKEKRKDSNHHHHHN) shows a compositional bias: basic residues. A Phosphoserine modification is found at Ser238. Residues 273 to 323 (DAVCCICNDGECQNSNVILFCDMCNLAVHQECYGVPYIPEGQWLCRRCLQS) form a PHD-type 1 zinc finger. The C2HC pre-PHD-type zinc-finger motif lies at 327–360 (AVDCALCPNKGGAFKQTDDGRWAHVVCALWIPEV). The segment at 384-448 (LTCYICKQRG…RKTAYCDIHT (65 aa)) adopts a PHD-type 2 zinc-finger fold. The interval 448 to 489 (TPPGSARRLPALSHSEGEEDEDEEEDEGKGWSSEKVKKAKAK) is disordered. A phosphoserine mark is found at Ser460 and Ser462. Residues 464–474 (GEEDEDEEEDE) show a composition bias toward acidic residues. Residues 501–821 (LAEKRAAAPV…IKKEMTALRR (321 aa)) form an interaction with MEAF6 and ING5 region. The required for RUNX1 and RUNX2 transcriptional activation stretch occupies residues 543–1079 (YWTLKRQSRN…RGAGWLSEDE (537 aa)). Position 580 is an N6-acetyllysine (Lys580). In terms of domain architecture, Bromo spans 628–732 (MQLTPFLILL…EQGGAVLRQA (105 aa)). Positions 819-1062 (LRRKLAHQRE…VGTGRGVGHS (244 aa)) are disordered. Positions 825-838 (HQRETGRDGPERHG) are enriched in basic and acidic residues. Phosphothreonine is present on Thr858. A compositionally biased stretch (low complexity) spans 858 to 871 (TDSAAEESSSQETS). Ser860, Ser917, Ser922, and Ser926 each carry phosphoserine. A compositionally biased stretch (low complexity) spans 993–1021 (SLPRSSSDSESSSSSSSSAASDRTSTTPS). Residue Ser1076 is modified to Phosphoserine. The PWWP domain occupies 1085–1168 (ALDLVWAKCR…RTKLVPLGVN (84 aa)). Ser1187 bears the Phosphoserine mark.

Component of some HBO1 complex composed of KAT7/HBO1, MEAF6, ING5, and BRPF1. Component of the MOZ/MORF complex composed at least of ING5, KAT6A, KAT6B, MEAF6 and one of BRPF1, BRD1/BRPF2 and BRPF3. Interacts (via PHD-type zinc finger domains) with unmethylated histone H3 at 'Lys-4' (H3K4me0). Interacts with trimethylated 'Lys-36' of histone H3 (H3K36me3). Interacts with ING5; interaction directs BRPF1 to H4K4me3-enriched chromatin at the 5' of active genes. Interacts with KAT7. Acetylated by KAT6A. As to expression, high levels in testis.

It localises to the nucleus. It is found in the chromosome. The protein localises to the cytoplasm. In terms of biological role, scaffold subunit of various histone acetyltransferase (HAT) complexes, such as the MOZ/MORF and HBO1 complexes, which have a histone H3 acetyltransferase activity. Plays a key role in HBO1 complex by directing KAT7/HBO1 specificity towards histone H3 'Lys-14' acetylation (H3K14ac). Some HAT complexes preferentially mediate histone H3 'Lys-23' (H3K23ac) acetylation. Positively regulates the transcription of RUNX1 and RUNX2. The sequence is that of Peregrin from Homo sapiens (Human).